The following is a 236-amino-acid chain: Small ribosomal subunit protein uS3 (236 aa).

Residues 39–107 (IREFLTEELK…DTSLNIVEVR (69 aa)) enclose the KH type-2 domain. The tract at residues 214–236 (ASERRAVEGDNQGSSSNRRRENA) is disordered.

It belongs to the universal ribosomal protein uS3 family. As to quaternary structure, part of the 30S ribosomal subunit. Forms a tight complex with proteins S10 and S14.

Its function is as follows. Binds the lower part of the 30S subunit head. Binds mRNA in the 70S ribosome, positioning it for translation. This Brucella suis (strain ATCC 23445 / NCTC 10510) protein is Small ribosomal subunit protein uS3.